The primary structure comprises 2370 residues: Genome polyprotein (2370 aa).

Gly112 carries N-myristoyl glycine; by host lipidation. Disordered regions lie at residues 140 to 173 and 704 to 736; these read VGDM…GNVV and GADG…FDYP. The segment covering 154–171 has biased composition (low complexity); it reads GSNKGGSSTSPKSTSNGN. Residues 713–725 are compositionally biased toward polar residues; it reads APTSDLSDGNPTT. In terms of domain architecture, SF3 helicase spans 1358–1522; it reads YSTALSAISL…AAFSAAAALK (165 aa). 1384-1391 provides a ligand contact to ATP; it reads GPPGTGKS. Gly1597 is lipidated: N-myristoyl glycine; by host. The chain crosses the membrane as a helical span at residues 1646 to 1666; it reads IFAASSFLSLIAATLTIVRCL. Residues 1674–1696 are disordered; it reads GAYSGTPVPKPRKKDLPKQPVYS. Tyr1676 carries the O-(5'-phospho-RNA)-tyrosine modification. The Peptidase C3 domain occupies 1697–1886; sequence GPVRRQGFDP…FSARLTPERV (190 aa). Catalysis depends on for protease 3C activity residues His1745, Glu1776, and Cys1849. The span at 2007 to 2016 shows a compositional bias: polar residues; it reads SPGYPWTTQG. Residues 2007–2026 form a disordered region; the sequence is SPGYPWTTQGRSRRSLFDED. A RdRp catalytic domain is found at 2122-2239; it reads SNVWSIDYSC…GSNQDFHPRE (118 aa). Residues Asp2128 and Asp2225 each act as for RdRp activity in the active site.

Interacts with capsid protein VP1. Interacts with capsid protein VP3. In terms of assembly, interacts with capsid protein VP0. Interacts with capsid protein VP3. As to quaternary structure, interacts with capsid protein VP0. Interacts with capsid protein VP1. Homodimer. Interacts with protein 2B. Interacts with protein 2C. In terms of assembly, homodimer. Interacts with host ABCD3. Interacts with protein 2A. Interacts with host ACBD3. As to quaternary structure, homodimer. Interacts with host ABCD3. Interacts with protein 2A. Interacts with protein 3A. Interacts with protein 3C. Interacts with host ACBD3. Homodimer. Interacts with host ABCD3 (via GOLD domain) and PI4KB; these interactions allow the formation of a viral protein/ACBD3/PI4KB complex in order to synthesize PI4P at the viral RNA replication sites. Interacts with protein 2C. Interacts with protein 3C. Protein 3C: Interacts with protein 2A. Protein 3C: Interacts with protein 2C. Specific enzymatic cleavages by the viral protease in vivo yield a variety of precursors and mature proteins. The leader protein-VP0 junction is cleaved by 3C proteinase. The VP1/2A junction is cleaved by the protein 3CD in association with protein 2A. Post-translationally, uridylylated by the polymerase and is covalently linked to the 5'-end of genomic RNA. This uridylylated form acts as a nucleotide-peptide primer for the polymerase.

Its subcellular location is the virion. The protein localises to the host cytoplasm. It is found in the host cytoplasmic vesicle membrane. The protein resides in the host Golgi apparatus membrane. It catalyses the reaction RNA(n) + a ribonucleoside 5'-triphosphate = RNA(n+1) + diphosphate. The enzyme catalyses Selective cleavage of Gln-|-Gly bond in the poliovirus polyprotein. In other picornavirus reactions Glu may be substituted for Gln, and Ser or Thr for Gly.. The catalysed reaction is ATP + H2O = ADP + phosphate + H(+). Its function is as follows. Required for viral RNA replication and viral RNA encapsidation. Does not have any proteolytic activity. Functionally, forms an icosahedral capsid of pseudo T=3 symmetry with capsid proteins VP0 and VP3. Together they form an icosahedral capsid composed of 60 copies of each VP0, VP1, and VP3. All the three latter proteins contain a beta-sheet structure called beta-barrel jelly roll. Forms an icosahedral capsid of pseudo T=3 symmetry with capsid proteins VP1 and VP3. Together they form an icosahedral capsid composed of 60 copies of each VP0, VP1, and VP3. All the three latter proteins contain a beta-sheet structure called beta-barrel jelly roll. In terms of biological role, forms an icosahedral capsid of pseudo T=3 symmetry with capsid proteins VP0 and VP1. Together they form an icosahedral capsid composed of 60 copies of each VP0, VP1, and VP3. All the three latter proteins contain a beta-sheet structure called beta-barrel jelly roll. Its function is as follows. Required for viral RNA replication. Does not have any proteolytic activity. Functionally, affects membrane integrity and causes an increase in membrane permeability. Induces and associates with structural rearrangements of intracellular membranes. Displays RNA-binding, nucleotide binding and NTPase activities. May play a role in virion morphogenesis and viral RNA encapsidation by interacting with the capsid protein VP3. In terms of biological role, serves as membrane anchor via its hydrophobic domain. Plays an essential role in viral RNA replication by recruiting PI4KB at the viral replication sites, thereby allowing the formation of rearranged membranous structures where viral replication takes place. Its function is as follows. Forms a primer, VPg-pU, which is utilized by the polymerase for the initiation of RNA chains. Functionally, cysteine protease that generates mature viral proteins from the precursor polyprotein. In addition to its proteolytic activity, it binds to viral RNA, and thus influences viral genome replication. RNA and substrate cooperatively bind to the protease. Replicates the genomic and antigenomic RNAs by recognizing replications specific signals. Performs VPg uridylylation. The chain is Genome polyprotein from Homo sapiens (Human).